The sequence spans 368 residues: UDP-N-acetylglucosamine--N-acetylmuramyl-(pentapeptide) pyrophosphoryl-undecaprenol N-acetylglucosamine transferase (368 aa).

UDP-N-acetyl-alpha-D-glucosamine-binding positions include 10 to 12 (TGG), asparagine 126, serine 200, isoleucine 255, and glutamine 300.

It belongs to the glycosyltransferase 28 family. MurG subfamily.

The protein localises to the cell membrane. The catalysed reaction is Mur2Ac(oyl-L-Ala-gamma-D-Glu-L-Lys-D-Ala-D-Ala)-di-trans,octa-cis-undecaprenyl diphosphate + UDP-N-acetyl-alpha-D-glucosamine = beta-D-GlcNAc-(1-&gt;4)-Mur2Ac(oyl-L-Ala-gamma-D-Glu-L-Lys-D-Ala-D-Ala)-di-trans,octa-cis-undecaprenyl diphosphate + UDP + H(+). It participates in cell wall biogenesis; peptidoglycan biosynthesis. Its function is as follows. Cell wall formation. Catalyzes the transfer of a GlcNAc subunit on undecaprenyl-pyrophosphoryl-MurNAc-pentapeptide (lipid intermediate I) to form undecaprenyl-pyrophosphoryl-MurNAc-(pentapeptide)GlcNAc (lipid intermediate II). The sequence is that of UDP-N-acetylglucosamine--N-acetylmuramyl-(pentapeptide) pyrophosphoryl-undecaprenol N-acetylglucosamine transferase from Lactobacillus acidophilus (strain ATCC 700396 / NCK56 / N2 / NCFM).